A 352-amino-acid chain; its full sequence is Histidine biosynthesis bifunctional protein HisB (352 aa).

A histidinol-phosphatase region spans residues 1 to 163 (MKKILFIDRD…MVASAIINDA (163 aa)). D8 functions as the Nucleophile in the catalytic mechanism. Mg(2+) contacts are provided by D8 and D10. The active-site Proton donor is D10. C91, H93, C99, and C101 together coordinate Zn(2+). D128 lines the Mg(2+) pocket. The imidazoleglycerol-phosphate dehydratase stretch occupies residues 164-352 (RKASVQRKTK…NYLPSTKGVL (189 aa)).

The protein in the N-terminal section; belongs to the histidinol-phosphatase family. In the C-terminal section; belongs to the imidazoleglycerol-phosphate dehydratase family. The cofactor is Mg(2+). Requires Zn(2+) as cofactor.

The protein resides in the cytoplasm. It carries out the reaction D-erythro-1-(imidazol-4-yl)glycerol 3-phosphate = 3-(imidazol-4-yl)-2-oxopropyl phosphate + H2O. The enzyme catalyses L-histidinol phosphate + H2O = L-histidinol + phosphate. It participates in amino-acid biosynthesis; L-histidine biosynthesis; L-histidine from 5-phospho-alpha-D-ribose 1-diphosphate: step 6/9. Its pathway is amino-acid biosynthesis; L-histidine biosynthesis; L-histidine from 5-phospho-alpha-D-ribose 1-diphosphate: step 8/9. The protein is Histidine biosynthesis bifunctional protein HisB of Legionella pneumophila subsp. pneumophila (strain Philadelphia 1 / ATCC 33152 / DSM 7513).